The chain runs to 283 residues: Pantothenate synthetase (283 aa).

30–37 is an ATP binding site; the sequence is MGALHEGH. Catalysis depends on H37, which acts as the Proton donor. Position 61 (Q61) interacts with (R)-pantoate. Residue Q61 participates in beta-alanine binding. 147-150 serves as a coordination point for ATP; that stretch reads GEKD. Q153 provides a ligand contact to (R)-pantoate. ATP contacts are provided by residues I176 and 184–187; that span reads VSSR.

It belongs to the pantothenate synthetase family. Homodimer.

The protein resides in the cytoplasm. The catalysed reaction is (R)-pantoate + beta-alanine + ATP = (R)-pantothenate + AMP + diphosphate + H(+). Its pathway is cofactor biosynthesis; (R)-pantothenate biosynthesis; (R)-pantothenate from (R)-pantoate and beta-alanine: step 1/1. Catalyzes the condensation of pantoate with beta-alanine in an ATP-dependent reaction via a pantoyl-adenylate intermediate. In Chlorobium phaeobacteroides (strain DSM 266 / SMG 266 / 2430), this protein is Pantothenate synthetase.